Consider the following 163-residue polypeptide: Nucleotide-binding protein Cla_1551 (163 aa).

The protein belongs to the YajQ family.

Functionally, nucleotide-binding protein. The protein is Nucleotide-binding protein Cla_1551 of Campylobacter lari (strain RM2100 / D67 / ATCC BAA-1060).